Here is a 386-residue protein sequence, read N- to C-terminus: Patatin-15 (386 aa).

The N-terminal stretch at 1–23 (MATTKSFLILFFMILATTSSTCA) is a signal peptide. The region spanning 32 to 229 (LSIDGGGIKG…TVGDPALLSL (198 aa)) is the PNPLA domain. The short motif at 36 to 41 (GGGIKG) is the GXGXXG element. The short motif at 75–79 (GTSTG) is the GXSXG element. Serine 77 acts as the Nucleophile in catalysis. An N-linked (GlcNAc...) asparagine glycan is attached at asparagine 115. The active-site Proton acceptor is the aspartate 215. The DGA/G signature appears at 215-217 (DGG). A coiled-coil region spans residues 321–384 (ENALTGTTTE…DRKKLRANKA (64 aa)).

Belongs to the patatin family. Tuber.

Its subcellular location is the vacuole. In terms of biological role, probable lipolytic acyl hydrolase (LAH), an activity which is thought to be involved in the response of tubers to pathogens. In Solanum tuberosum (Potato), this protein is Patatin-15.